The primary structure comprises 433 residues: D-amino acid dehydrogenase (433 aa).

3–17 (VLVLGSGVIGTTSAY) contacts FAD.

This sequence belongs to the DadA oxidoreductase family. Requires FAD as cofactor.

The enzyme catalyses a D-alpha-amino acid + A + H2O = a 2-oxocarboxylate + AH2 + NH4(+). In terms of biological role, oxidative deamination of D-amino acids. This is D-amino acid dehydrogenase from Pseudomonas syringae pv. tomato (strain ATCC BAA-871 / DC3000).